A 345-amino-acid polypeptide reads, in one-letter code: 4-hydroxyproline 2-epimerase (345 aa).

Residue Gln85 coordinates substrate. The Proton acceptor role is filled by Ser93. Substrate contacts are provided by residues 94–95 (GS) and Asp251. Residue Cys255 is the Proton donor of the active site. 256 to 257 (GT) is a binding site for substrate.

Belongs to the proline racemase family.

The enzyme catalyses trans-4-hydroxy-L-proline = cis-4-hydroxy-D-proline. In terms of biological role, catalyzes the epimerization of trans-4-hydroxy-L-proline (t4LHyp) to cis-4-hydroxy-D-proline (c4DHyp). May be involved in a degradation pathway of t4LHyp. Can also catalyze the epimerization of trans-3-hydroxy-L-proline (t3LHyp) to cis-3-hydroxy-D-proline (c3DHyp) in vitro, albeit with 2-fold lower efficiency. Displays no proline racemase activity. The protein is 4-hydroxyproline 2-epimerase of Rhizobium etli (strain ATCC 51251 / DSM 11541 / JCM 21823 / NBRC 15573 / CFN 42).